Consider the following 118-residue polypeptide: Holo-[acyl-carrier-protein] synthase (118 aa).

Positions 8 and 57 each coordinate Mg(2+).

It belongs to the P-Pant transferase superfamily. AcpS family. Requires Mg(2+) as cofactor.

The protein localises to the cytoplasm. It carries out the reaction apo-[ACP] + CoA = holo-[ACP] + adenosine 3',5'-bisphosphate + H(+). Its function is as follows. Transfers the 4'-phosphopantetheine moiety from coenzyme A to a Ser of acyl-carrier-protein. The polypeptide is Holo-[acyl-carrier-protein] synthase (Pediococcus pentosaceus (strain ATCC 25745 / CCUG 21536 / LMG 10740 / 183-1w)).